The sequence spans 171 residues: tRNA-specific adenosine deaminase (171 aa).

The CMP/dCMP-type deaminase domain maps to 6 to 133 (EEQTYFMQEA…ERLNHRVQVE (128 aa)). Residue His-57 coordinates Zn(2+). Glu-59 acts as the Proton donor in catalysis. The Zn(2+) site is built by Cys-87 and Cys-90.

Belongs to the cytidine and deoxycytidylate deaminase family. In terms of assembly, homodimer. Requires Zn(2+) as cofactor.

It carries out the reaction adenosine(34) in tRNA + H2O + H(+) = inosine(34) in tRNA + NH4(+). In terms of biological role, catalyzes the deamination of adenosine to inosine at the wobble position 34 of tRNA(Arg2). The polypeptide is tRNA-specific adenosine deaminase (Streptococcus pyogenes serotype M1).